Consider the following 147-residue polypeptide: Large ribosomal subunit protein uL13 (147 aa).

The protein belongs to the universal ribosomal protein uL13 family. In terms of assembly, part of the 50S ribosomal subunit.

Functionally, this protein is one of the early assembly proteins of the 50S ribosomal subunit, although it is not seen to bind rRNA by itself. It is important during the early stages of 50S assembly. In Streptomyces avermitilis (strain ATCC 31267 / DSM 46492 / JCM 5070 / NBRC 14893 / NCIMB 12804 / NRRL 8165 / MA-4680), this protein is Large ribosomal subunit protein uL13.